A 180-amino-acid chain; its full sequence is NADH-quinone oxidoreductase subunit I (180 aa).

2 4Fe-4S ferredoxin-type domains span residues 48–80 and 90–119; these read IVLT…LQKA and EFFR…LTPD. Cysteine 60, cysteine 63, cysteine 66, cysteine 70, cysteine 99, cysteine 102, cysteine 105, and cysteine 109 together coordinate [4Fe-4S] cluster. Residues 161–174 show a composition bias toward basic and acidic residues; that stretch reads KPKGDAEHEAKPID. A disordered region spans residues 161-180; that stretch reads KPKGDAEHEAKPIDVKSLLP.

It belongs to the complex I 23 kDa subunit family. As to quaternary structure, NDH-1 is composed of 14 different subunits. Subunits NuoA, H, J, K, L, M, N constitute the membrane sector of the complex. It depends on [4Fe-4S] cluster as a cofactor.

It is found in the cell inner membrane. It carries out the reaction a quinone + NADH + 5 H(+)(in) = a quinol + NAD(+) + 4 H(+)(out). NDH-1 shuttles electrons from NADH, via FMN and iron-sulfur (Fe-S) centers, to quinones in the respiratory chain. The immediate electron acceptor for the enzyme in this species is believed to be ubiquinone. Couples the redox reaction to proton translocation (for every two electrons transferred, four hydrogen ions are translocated across the cytoplasmic membrane), and thus conserves the redox energy in a proton gradient. This chain is NADH-quinone oxidoreductase subunit I, found in Aeromonas salmonicida (strain A449).